The chain runs to 963 residues: Iron-responsive element-binding protein 2 (963 aa).

Positions 512, 578, and 581 each coordinate [4Fe-4S] cluster.

This sequence belongs to the aconitase/IPM isomerase family. Interacts with RBCK1 isoform 1 and isoform 2 only in iron-rich conditions. Interacts (when associated with the 4Fe-4S) with FBXL5. Interacts with CIAO1 and CIAO2A. Requires [4Fe-4S] cluster as cofactor. In terms of processing, ubiquitinated and degraded by the proteasome in presence of high level of iron and oxygen. Ubiquitinated by a SCF complex containing FBXL5. Upon iron and oxygen depletion FBXL5 is degraded, preventing ubiquitination and allowing its RNA-binding activity.

It localises to the cytoplasm. In terms of biological role, RNA-binding protein that binds to iron-responsive elements (IRES), which are stem-loop structures found in the 5'-UTR of ferritin, and delta aminolevulinic acid synthase mRNAs, and in the 3'-UTR of transferrin receptor mRNA. Binding to the IRE element in ferritin results in the repression of its mRNA translation. Binding of the protein to the transferrin receptor mRNA inhibits the degradation of this otherwise rapidly degraded mRNA. This is Iron-responsive element-binding protein 2 (IREB2) from Homo sapiens (Human).